We begin with the raw amino-acid sequence, 570 residues long: Dwarfin sma-4 (570 aa).

A disordered region spans residues 115-134; sequence SSQASSQPPPTPTVNPTPIP. The span at 121–134 shows a compositional bias: pro residues; it reads QPPPTPTVNPTPIP. Positions 150-273 constitute an MH1 domain; it reads QISHVLQCYQ…YERVVSNRIT (124 aa). The Zn(2+) site is built by Cys-203, Cys-247, Cys-258, and His-263. The MH2 domain maps to 350–570; the sequence is WCSIIYYELD…LKNSSQFGSS (221 aa).

It belongs to the dwarfin/SMAD family.

The protein localises to the cytoplasm. Its subcellular location is the nucleus. In terms of biological role, involved in TGF-beta pathway. The chain is Dwarfin sma-4 (sma-4) from Caenorhabditis elegans.